We begin with the raw amino-acid sequence, 599 residues long: Potassium-transporting ATPase potassium-binding subunit (599 aa).

12 helical membrane-spanning segments follow: residues Leu8 to Ala28, Trp61 to Leu81, Ala133 to Phe153, Ala176 to Ile196, Leu280 to Phe300, Trp311 to Ala331, Ile366 to Ala386, Phe391 to Gly411, Gly416 to Gly436, Ile456 to Gly476, Leu521 to Ala541, and Leu563 to Ala583.

This sequence belongs to the KdpA family. The system is composed of three essential subunits: KdpA, KdpB and KdpC.

It is found in the cell inner membrane. Part of the high-affinity ATP-driven potassium transport (or Kdp) system, which catalyzes the hydrolysis of ATP coupled with the electrogenic transport of potassium into the cytoplasm. This subunit binds the periplasmic potassium ions and delivers the ions to the membrane domain of KdpB through an intramembrane tunnel. The chain is Potassium-transporting ATPase potassium-binding subunit from Polaromonas naphthalenivorans (strain CJ2).